Consider the following 405-residue polypeptide: NADH-quinone oxidoreductase subunit D (405 aa).

The protein belongs to the complex I 49 kDa subunit family. As to quaternary structure, NDH-1 is composed of 14 different subunits. Subunits NuoB, C, D, E, F, and G constitute the peripheral sector of the complex.

The protein resides in the cell inner membrane. The catalysed reaction is a quinone + NADH + 5 H(+)(in) = a quinol + NAD(+) + 4 H(+)(out). Functionally, NDH-1 shuttles electrons from NADH, via FMN and iron-sulfur (Fe-S) centers, to quinones in the respiratory chain. The immediate electron acceptor for the enzyme in this species is believed to be ubiquinone. Couples the redox reaction to proton translocation (for every two electrons transferred, four hydrogen ions are translocated across the cytoplasmic membrane), and thus conserves the redox energy in a proton gradient. The sequence is that of NADH-quinone oxidoreductase subunit D from Leptospira borgpetersenii serovar Hardjo-bovis (strain L550).